The sequence spans 227 residues: Germin-like protein subfamily 3 member 2 (227 aa).

Positions 1 to 24 are cleaved as a signal peptide; sequence MEANTLFLLKALCLLCFNVCFTLA. Cys-34 and Cys-54 form a disulfide bridge. N-linked (GlcNAc...) asparagine glycans are attached at residues Asn-56 and Asn-75. The 146-residue stretch at 68 to 213 folds into the Cupin type-1 domain; that stretch reads SGLKTAGNFT…AFGLSLKQIG (146 aa). Residues His-115, His-117, Glu-122, and His-161 each coordinate Mn(2+).

The protein belongs to the germin family. In terms of assembly, oligomer (believed to be a pentamer but probably hexamer).

The protein resides in the secreted. Its subcellular location is the extracellular space. It is found in the apoplast. In terms of biological role, may play a role in plant defense. Probably has no oxalate oxidase activity even if the active site is conserved. The sequence is that of Germin-like protein subfamily 3 member 2 from Arabidopsis thaliana (Mouse-ear cress).